A 66-amino-acid chain; its full sequence is uncharacterized protein (66 aa).

This is an uncharacterized protein from Homo sapiens (Human).